The chain runs to 335 residues: MTKEKIGVVLLNMGGPDSLDAIQPFLYNLFSDHDIIQIPKPIQKPVAFLISRLRAKKTKKYYEIMGGKSPQKEQTLQQAQKLQEKLEEDYKVVVAMRYWHPFTEEALNQLFQEKIKKIILLPLYPQYSRTTTGSSFNEFDRRVKRYINPGKFAVLSTLKGTKDPYYYFSNIPIAKINCYFDNPLYIKAMVENIKENLPEDYKDYYFLFTAHSLPEKIILDGDPYKKQTETTVKLIMEHFPNVKYSLAYQSKVGPVKWLEPFTDQEIERLIKEGYKKLIVIPVSFVSEHSETLYELDYLYGNIAKELGAESYIRIPTLKSHPMFIETLKELVIKNS.

Fe cation is bound by residues H211 and E290.

This sequence belongs to the ferrochelatase family.

Its subcellular location is the cytoplasm. It catalyses the reaction heme b + 2 H(+) = protoporphyrin IX + Fe(2+). It participates in porphyrin-containing compound metabolism; protoheme biosynthesis; protoheme from protoporphyrin-IX: step 1/1. Catalyzes the ferrous insertion into protoporphyrin IX. The protein is Ferrochelatase of Sulfurihydrogenibium sp. (strain YO3AOP1).